A 369-amino-acid polypeptide reads, in one-letter code: Phospho-N-acetylmuramoyl-pentapeptide-transferase (369 aa).

Helical transmembrane passes span 2 to 22 (IPLL…TQLF), 55 to 75 (AVVI…SWWI), 82 to 102 (PSVS…VGFL), 120 to 140 (AKLI…INFA), 163 to 183 (LAFA…NLII), 196 to 216 (LDGL…LIGI), 240 to 260 (PLDL…FLWW), 267 to 287 (IFMG…FAIL), 292 to 312 (ILLA…ILQV), and 349 to 369 (ILGG…WVVF).

Belongs to the glycosyltransferase 4 family. MraY subfamily. It depends on Mg(2+) as a cofactor.

It is found in the cell membrane. The catalysed reaction is UDP-N-acetyl-alpha-D-muramoyl-L-alanyl-gamma-D-glutamyl-meso-2,6-diaminopimeloyl-D-alanyl-D-alanine + di-trans,octa-cis-undecaprenyl phosphate = di-trans,octa-cis-undecaprenyl diphospho-N-acetyl-alpha-D-muramoyl-L-alanyl-D-glutamyl-meso-2,6-diaminopimeloyl-D-alanyl-D-alanine + UMP. Its pathway is cell wall biogenesis; peptidoglycan biosynthesis. Catalyzes the initial step of the lipid cycle reactions in the biosynthesis of the cell wall peptidoglycan: transfers peptidoglycan precursor phospho-MurNAc-pentapeptide from UDP-MurNAc-pentapeptide onto the lipid carrier undecaprenyl phosphate, yielding undecaprenyl-pyrophosphoryl-MurNAc-pentapeptide, known as lipid I. This chain is Phospho-N-acetylmuramoyl-pentapeptide-transferase, found in Renibacterium salmoninarum (strain ATCC 33209 / DSM 20767 / JCM 11484 / NBRC 15589 / NCIMB 2235).